A 378-amino-acid chain; its full sequence is MAGFTMSLNLLLLVAMVATNILSLYHLSSTTNFFQSTVKSSQSSVPTVPDHLLRQLHTIRAAINHLTTHQPDKSTSTSTSRAAVSSSSSSTAPKELLIYSKLSPIASACHNYPDLLHEYMNYTPFSLCPSDTDLVEKLILRGCHPLPRRRCFSRTPRNPSDSKPESNVLWSYYSCKSFDCLITKFSDLGFDLSLEKSKSQFSAYKSELDLPISQLLQIAKSANSVLRLGIDVGGGTGSFAAAMKARNVTVLTTTMNFNAPYSEAVAMRGLVPLHVPLQQRLPVFDGVVDLVRCGRAVNRWIPVTVMEFFFFDLDRILRGGGYLWLDRFFSKKVDLENVYAPMIGKLGYKKVKWAVANKADSKHGEVFLTALLQKPVAR.

Residues 1 to 6 (MAGFTM) are Cytoplasmic-facing. A helical; Signal-anchor for type II membrane protein membrane pass occupies residues 7–29 (SLNLLLLVAMVATNILSLYHLSS). Residues 30–378 (TTNFFQSTVK…TALLQKPVAR (349 aa)) are Lumenal-facing. The disordered stretch occupies residues 67–87 (TTHQPDKSTSTSTSRAAVSSS). Over residues 74–87 (STSTSTSRAAVSSS) the composition is skewed to low complexity. N-linked (GlcNAc...) asparagine glycosylation occurs at N247.

It belongs to the methyltransferase superfamily.

The protein resides in the golgi apparatus membrane. The polypeptide is Probable methyltransferase At1g29790 (Arabidopsis thaliana (Mouse-ear cress)).